We begin with the raw amino-acid sequence, 216 residues long: Refilin-B (216 aa).

The disordered stretch occupies residues methionine 1–arginine 52. 2 positions are modified to phosphoserine: serine 6 and serine 26.

It belongs to the Refilin family. As to quaternary structure, interacts with FLNA and FLNB.

The protein localises to the cytoplasm. Its subcellular location is the cytoskeleton. In terms of biological role, involved in the regulation of the perinuclear actin network and nuclear shape through interaction with filamins. Plays an essential role in the formation of cartilaginous skeletal elements. In Rattus norvegicus (Rat), this protein is Refilin-B.